Here is a 111-residue protein sequence, read N- to C-terminus: MKTLLLALAVVVLVCLGSANELGLGRQQIDRGRRQAIGPPYGICYQCNRKSCRDCFNPKRCPSYHTMCYTLYKPNENGAEEWAVKGCARKCPTAGPNERVNCCRGRDCNND.

The signal sequence occupies residues 1–19 (MKTLLLALAVVVLVCLGSA). The propeptide occupies 20 to 34 (NELGLGRQQIDRGRR). A Pyrrolidone carboxylic acid modification is found at Gln35. 5 disulfides stabilise this stretch: Cys44/Cys68, Cys47/Cys55, Cys61/Cys87, Cys91/Cys102, and Cys103/Cys108.

Belongs to the three-finger toxin family. Ancestral subfamily. Boigatoxin sub-subfamily. In terms of assembly, heterodimer of sulditoxin subunits A and B; probably disulfide-linked. As to expression, expressed by the venom gland.

It localises to the secreted. Its function is as follows. Reptile-specific neurotoxin (tested on geckos). Inhibits nicotinic acetylcholine receptor (nAChR). Not toxic to mammals (tested on mice). The sequence is that of Sulditoxin subunit B from Spilotes sulphureus (Amazon puffing snake).